Consider the following 329-residue polypeptide: GTPase Obg (329 aa).

The Obg domain occupies 1 to 159; that stretch reads MQFIDEAKIF…MWVWLHLKLL (159 aa). In terms of domain architecture, OBG-type G spans 160 to 327; it reads SDVGLVGLPN…LLANILSELQ (168 aa). GTP contacts are provided by residues 166–173, 191–195, 212–215, 279–282, and 308–310; these read GLPNAGKS, FTTLT, DIPG, TKTD, and SSY. Mg(2+) is bound by residues S173 and T193.

This sequence belongs to the TRAFAC class OBG-HflX-like GTPase superfamily. OBG GTPase family. In terms of assembly, monomer. Requires Mg(2+) as cofactor.

It is found in the cytoplasm. Its function is as follows. An essential GTPase which binds GTP, GDP and possibly (p)ppGpp with moderate affinity, with high nucleotide exchange rates and a fairly low GTP hydrolysis rate. Plays a role in control of the cell cycle, stress response, ribosome biogenesis and in those bacteria that undergo differentiation, in morphogenesis control. The protein is GTPase Obg of Orientia tsutsugamushi (strain Boryong) (Rickettsia tsutsugamushi).